Reading from the N-terminus, the 101-residue chain is UPF0235 protein MmarC6_1603 (101 aa).

The protein belongs to the UPF0235 family.

This Methanococcus maripaludis (strain C6 / ATCC BAA-1332) protein is UPF0235 protein MmarC6_1603.